A 348-amino-acid chain; its full sequence is Small ribosomal subunit biogenesis GTPase RsgA (348 aa).

Residues 1–14 (MAKRKLSKQQKWRI) are compositionally biased toward basic residues. The interval 1 to 39 (MAKRKLSKQQKWRIQKIQDERTKRATRKETQLESQLSGG) is disordered. Basic and acidic residues predominate over residues 16-31 (KIQDERTKRATRKETQ). The CP-type G domain maps to 116–275 (FGQLKPIAAN…LIDSPGIREF (160 aa)). GTP is bound by residues 163 to 166 (NKQD) and 217 to 225 (GQSGVGKSS). Residues cysteine 299, cysteine 304, histidine 306, and cysteine 312 each contribute to the Zn(2+) site.

This sequence belongs to the TRAFAC class YlqF/YawG GTPase family. RsgA subfamily. As to quaternary structure, monomer. Associates with 30S ribosomal subunit, binds 16S rRNA. Zn(2+) is required as a cofactor.

It localises to the cytoplasm. In terms of biological role, one of several proteins that assist in the late maturation steps of the functional core of the 30S ribosomal subunit. Helps release RbfA from mature subunits. May play a role in the assembly of ribosomal proteins into the subunit. Circularly permuted GTPase that catalyzes slow GTP hydrolysis, GTPase activity is stimulated by the 30S ribosomal subunit. The protein is Small ribosomal subunit biogenesis GTPase RsgA of Hahella chejuensis (strain KCTC 2396).